A 361-amino-acid polypeptide reads, in one-letter code: Phospho-N-acetylmuramoyl-pentapeptide-transferase (361 aa).

The next 10 helical transmembrane spans lie at 25 to 45 (RAVLASLTALGIGLALGPWVI), 73 to 93 (TMGGTLILLSIGITTLLWADL), 97 to 117 (YVWLLLAVLFGTGAIGFYDDW), 134 to 154 (MFWQSAIAIFAGIYLISTASL), 168 to 188 (VIYPFGVVGFCILTYFVIVGT), 200 to 220 (GLAAMPVVMVSAALAVFAYVA), 240 to 260 (VAVFCAAMAGACLAFLWFNAY), 264 to 284 (VFMGDVGALALGAALGTVAVI), 289 to 309 (IVLFVMGGLFVMEALSVMIQV), and 338 to 358 (QVVVRFWIITMMLVLAGLSTL).

This sequence belongs to the glycosyltransferase 4 family. MraY subfamily. It depends on Mg(2+) as a cofactor.

It is found in the cell inner membrane. It carries out the reaction UDP-N-acetyl-alpha-D-muramoyl-L-alanyl-gamma-D-glutamyl-meso-2,6-diaminopimeloyl-D-alanyl-D-alanine + di-trans,octa-cis-undecaprenyl phosphate = di-trans,octa-cis-undecaprenyl diphospho-N-acetyl-alpha-D-muramoyl-L-alanyl-D-glutamyl-meso-2,6-diaminopimeloyl-D-alanyl-D-alanine + UMP. It functions in the pathway cell wall biogenesis; peptidoglycan biosynthesis. In terms of biological role, catalyzes the initial step of the lipid cycle reactions in the biosynthesis of the cell wall peptidoglycan: transfers peptidoglycan precursor phospho-MurNAc-pentapeptide from UDP-MurNAc-pentapeptide onto the lipid carrier undecaprenyl phosphate, yielding undecaprenyl-pyrophosphoryl-MurNAc-pentapeptide, known as lipid I. In Laribacter hongkongensis (strain HLHK9), this protein is Phospho-N-acetylmuramoyl-pentapeptide-transferase.